Consider the following 1022-residue polypeptide: Sodium/potassium-transporting ATPase subunit alpha (1022 aa).

A propeptide spanning residues methionine 1–alanine 5 is cleaved from the precursor. The interval methionine 1–glutamate 34 is disordered. Over alanine 6 to proline 87 the chain is Cytoplasmic. Serine 16 bears the Phosphoserine; by PKC mark. The interval proline 82–proline 84 is interaction with phosphoinositide-3 kinase. A helical membrane pass occupies residues glutamate 88–alanine 108. At isoleucine 109–tyrosine 131 the chain is on the lumenal side. A helical membrane pass occupies residues leucine 132 to alanine 152. Over lysine 153–isoleucine 288 the chain is Cytoplasmic. The disordered stretch occupies residues asparagine 215–asparagine 235. The helical transmembrane segment at glutamate 289–isoleucine 308 threads the bilayer. Topologically, residues leucine 309–alanine 320 are lumenal. Residues valine 321 to alanine 338 traverse the membrane as a helical segment. The Cytoplasmic portion of the chain corresponds to threonine 339–leucine 771. The active-site 4-aspartylphosphate intermediate is the aspartate 376. Mg(2+)-binding residues include aspartate 716 and aspartate 720. The chain crosses the membrane as a helical span at residues lysine 772–valine 791. Topologically, residues phenylalanine 792–leucine 801 are lumenal. A helical membrane pass occupies residues glycine 802–alanine 822. The Cytoplasmic portion of the chain corresponds to tyrosine 823 to lysine 842. The helical transmembrane segment at leucine 843–phenylalanine 865 threads the bilayer. Topologically, residues phenylalanine 866 to cysteine 917 are lumenal. The chain crosses the membrane as a helical span at residues histidine 918 to lysine 937. Residues threonine 938 to asparagine 950 are Cytoplasmic-facing. Position 942 is a phosphoserine; by PKA (serine 942). A helical membrane pass occupies residues lysine 951–tyrosine 969. Residues threonine 970–proline 984 lie on the Lumenal side of the membrane. Residues serine 985–arginine 1005 form a helical membrane-spanning segment. Residues phenylalanine 1006–tyrosine 1022 are Cytoplasmic-facing.

It belongs to the cation transport ATPase (P-type) (TC 3.A.3) family. Type IIC subfamily. As to quaternary structure, the sodium/potassium-transporting ATPase is composed of a catalytic alpha subunit, an auxiliary non-catalytic beta subunit and an additional regulatory subunit.

The protein resides in the cell membrane. It carries out the reaction K(+)(out) + Na(+)(in) + ATP + H2O = K(+)(in) + Na(+)(out) + ADP + phosphate + H(+). Its function is as follows. This is the catalytic component of the active enzyme, which catalyzes the hydrolysis of ATP coupled with the exchange of sodium and potassium ions across the plasma membrane. This action creates the electrochemical gradient of sodium and potassium ions, providing the energy for active transport of various nutrients. The chain is Sodium/potassium-transporting ATPase subunit alpha from Tetronarce californica (Pacific electric ray).